Consider the following 187-residue polypeptide: Ribosome-recycling factor (187 aa).

The protein belongs to the RRF family.

The protein resides in the cytoplasm. In terms of biological role, responsible for the release of ribosomes from messenger RNA at the termination of protein biosynthesis. May increase the efficiency of translation by recycling ribosomes from one round of translation to another. This Parabacteroides distasonis (strain ATCC 8503 / DSM 20701 / CIP 104284 / JCM 5825 / NCTC 11152) protein is Ribosome-recycling factor.